We begin with the raw amino-acid sequence, 680 residues long: Meiotic recombination protein REC8 (680 aa).

Composition is skewed to low complexity over residues 278–290 and 436–446; these read ENDN…GGED and SLVSTQSSSST. Disordered regions lie at residues 278–297, 431–467, and 540–560; these read ENDN…ENEG, RKRA…YSSD, and EQNF…GSQQ. The segment covering 550–560 has biased composition (polar residues); that stretch reads SNSCFSDGSQQ.

This sequence belongs to the rad21 family. Post-translationally, proteolytically cleaved by ESP1. In terms of processing, phosphorylated by CDC5. CDC5 phosphorylation is necessary for cleavage by ESP1 and subsequent removal from chromosome arms.

It is found in the nucleus. It localises to the chromosome. Its subcellular location is the centromere. Its function is as follows. Replaces the SCC1 mitosis-specific cohesin to ensure sister chromatid cohesion during meiosis. Is cleaved by ESP1 shortly before the first meiotic division, and dissociates from chromatin, allowing sister chromatids to segregate. Is protected from cleavage by SPO13. Promotes localization of the LINC complex subunit MPS3 on nuclear envelope in mitotic cells. The polypeptide is Meiotic recombination protein REC8 (Saccharomyces cerevisiae (strain ATCC 204508 / S288c) (Baker's yeast)).